A 137-amino-acid chain; its full sequence is Holo-[acyl-carrier-protein] synthase (137 aa).

Asp8 and Glu58 together coordinate Mg(2+).

It belongs to the P-Pant transferase superfamily. AcpS family. Mg(2+) is required as a cofactor.

It localises to the cytoplasm. It carries out the reaction apo-[ACP] + CoA = holo-[ACP] + adenosine 3',5'-bisphosphate + H(+). In terms of biological role, transfers the 4'-phosphopantetheine moiety from coenzyme A to a Ser of acyl-carrier-protein. The protein is Holo-[acyl-carrier-protein] synthase of Lactobacillus delbrueckii subsp. bulgaricus (strain ATCC 11842 / DSM 20081 / BCRC 10696 / JCM 1002 / NBRC 13953 / NCIMB 11778 / NCTC 12712 / WDCM 00102 / Lb 14).